The chain runs to 131 residues: Large ribosomal subunit protein bL17 (131 aa).

It belongs to the bacterial ribosomal protein bL17 family. As to quaternary structure, part of the 50S ribosomal subunit. Contacts protein L32.

The sequence is that of Large ribosomal subunit protein bL17 from Thermotoga sp. (strain RQ2).